We begin with the raw amino-acid sequence, 279 residues long: Tryptophan synthase alpha chain (279 aa).

Catalysis depends on proton acceptor residues E50 and D61.

This sequence belongs to the TrpA family. Tetramer of two alpha and two beta chains.

The enzyme catalyses (1S,2R)-1-C-(indol-3-yl)glycerol 3-phosphate + L-serine = D-glyceraldehyde 3-phosphate + L-tryptophan + H2O. It functions in the pathway amino-acid biosynthesis; L-tryptophan biosynthesis; L-tryptophan from chorismate: step 5/5. Its function is as follows. The alpha subunit is responsible for the aldol cleavage of indoleglycerol phosphate to indole and glyceraldehyde 3-phosphate. This Methylobacterium radiotolerans (strain ATCC 27329 / DSM 1819 / JCM 2831 / NBRC 15690 / NCIMB 10815 / 0-1) protein is Tryptophan synthase alpha chain.